Here is a 210-residue protein sequence, read N- to C-terminus: TBC1 domain family member 28 (210 aa).

The Rab-GAP TBC domain maps to 101-210 (VIPLAVRGRA…WVSLGGVATS (110 aa)).

The polypeptide is TBC1 domain family member 28 (TBC1D28) (Homo sapiens (Human)).